We begin with the raw amino-acid sequence, 232 residues long: Enolase-phosphatase E1 (232 aa).

Belongs to the HAD-like hydrolase superfamily. MasA/MtnC family. Monomer. Requires Mg(2+) as cofactor.

The enzyme catalyses 5-methylsulfanyl-2,3-dioxopentyl phosphate + H2O = 1,2-dihydroxy-5-(methylsulfanyl)pent-1-en-3-one + phosphate. It participates in amino-acid biosynthesis; L-methionine biosynthesis via salvage pathway; L-methionine from S-methyl-5-thio-alpha-D-ribose 1-phosphate: step 3/6. Its pathway is amino-acid biosynthesis; L-methionine biosynthesis via salvage pathway; L-methionine from S-methyl-5-thio-alpha-D-ribose 1-phosphate: step 4/6. Its function is as follows. Bifunctional enzyme that catalyzes the enolization of 2,3-diketo-5-methylthiopentyl-1-phosphate (DK-MTP-1-P) into the intermediate 2-hydroxy-3-keto-5-methylthiopentenyl-1-phosphate (HK-MTPenyl-1-P), which is then dephosphorylated to form the acireductone 1,2-dihydroxy-3-keto-5-methylthiopentene (DHK-MTPene). The polypeptide is Enolase-phosphatase E1 (Xanthomonas oryzae pv. oryzae (strain KACC10331 / KXO85)).